The chain runs to 346 residues: Putative [LysW]-L-2-aminoadipate/[LysW]-L-glutamate phosphate reductase (346 aa).

An NADP(+)-binding site is contributed by 12–15 (SGFT). Cysteine 147 is a catalytic residue. NADP(+) is bound at residue asparagine 310.

The protein belongs to the NAGSA dehydrogenase family. Type 1 subfamily. LysY sub-subfamily.

The protein resides in the cytoplasm. The catalysed reaction is [amino-group carrier protein]-C-terminal-N-(1-carboxy-5-oxopentan-1-yl)-L-glutamine + phosphate + NADP(+) = [amino-group carrier protein]-C-terminal-N-(1-carboxy-5-phosphooxy-5-oxopentan-1-yl)-L-glutamine + NADPH + H(+). The enzyme catalyses [amino-group carrier protein]-C-terminal-gamma-(L-glutamyl-5-semialdehyde)-L-glutamate + phosphate + NADP(+) = [amino-group carrier protein]-C-terminal-gamma-(5-phospho-L-glutamyl)-L-glutamate + NADPH + H(+). The protein operates within amino-acid biosynthesis; L-lysine biosynthesis via AAA pathway; L-lysine from L-alpha-aminoadipate (Thermus route): step 3/5. It functions in the pathway amino-acid biosynthesis; L-arginine biosynthesis. Its function is as follows. Involved in both the arginine and lysine biosynthetic pathways. The chain is Putative [LysW]-L-2-aminoadipate/[LysW]-L-glutamate phosphate reductase from Natronomonas pharaonis (strain ATCC 35678 / DSM 2160 / CIP 103997 / JCM 8858 / NBRC 14720 / NCIMB 2260 / Gabara) (Halobacterium pharaonis).